The following is a 190-amino-acid chain: Peptidoglycan recognition protein 1 (190 aa).

The N-terminal stretch at 1 to 21 (MSRRYTPLAWVLLALLGLGAA) is a signal peptide. At Gln-22 the chain carries Pyrrolidone carboxylic acid. Disulfide bonds link Cys-24–Cys-148, Cys-40–Cys-85, and Cys-61–Cys-67. The region spanning 46 to 174 (QPVRYVVVSH…RDVQQTLSPG (129 aa)) is the N-acetylmuramoyl-L-alanine amidase domain.

The protein belongs to the N-acetylmuramoyl-L-alanine amidase 2 family. Homodimer; disulfide-linked. Synthesized only in bone marrow. The mature protein is stored in the cytoplasmic granules of eosinophils and neutrophils but is absent from monocytes, lymphocytes, or platelets.

It localises to the secreted. The protein resides in the cytoplasmic granule. Its function is as follows. Innate immunity protein that plays several important functions in antimicrobial and antitumor defense systems. Acts as a pattern receptor that binds to murein peptidoglycans (PGN) of Gram-positive bacteria and thus provides bactericidal activity. Forms an equimolar complex with heat shock protein HSPA1A and induces programmed cell death through apoptosis and necroptosis in tumor cell lines by activating the TNFR1 receptor on the target cell membrane. In addition, acts in complex with the Ca(2+)-binding protein S100A4 as a chemoattractant able to induce lymphocyte movement. Mechanistically, this complex acts as a ligand of the chemotactic receptors CCR5 and CXCR3 which are present on the cells of the immune system. Also promotes the activation of lymphocytes that become able to kill virus-infected cells as well as tumor cells by modulating the spectrum of their target-cell specificity. Induction of cytotoxicity on monocyte surface requires interaction with TREM1 receptor. This Bos taurus (Bovine) protein is Peptidoglycan recognition protein 1 (PGLYRP1).